The following is a 404-amino-acid chain: Multidrug resistance protein MdtG (404 aa).

11 helical membrane passes run 19 to 39 (LGCFLTGAAFSLVMPFLPLYV), 56 to 76 (LVFSITFLFSAIASPFWGGLA), 90 to 110 (LGMAIVMLLMGMAQNIWQFLI), 113 to 133 (ALLGLLGGFIPNANALIATQV), 144 to 164 (TLSTGGVSGALLGPLAGGLLA), 171 to 191 (PVFFITASVLFICFLLTFFFI), 222 to 242 (LFVTTLIIQVATGSIAPILTL), 254 to 274 (IAFISGMIASVPGVAALLSAP), 288 to 308 (ILIVALIISVLLLIPMSFVQT), 317 to 337 (FLLGAADGALLPAVQTLLVYN), and 376 to 396 (AVFCVTAGVVLFNAIYSWNSL).

It belongs to the major facilitator superfamily. DHA1 family. MdtG (TC 2.A.1.2.20) subfamily.

It localises to the cell inner membrane. The polypeptide is Multidrug resistance protein MdtG (Salmonella arizonae (strain ATCC BAA-731 / CDC346-86 / RSK2980)).